Reading from the N-terminus, the 226-residue chain is Thymocyte nuclear protein 1 (226 aa).

Residues 1-38 (MPRPRKRQAGAAGPDKKQLSGKRTKTENSESASVKLEN) are disordered. A Nuclear localization signal motif is present at residues 5–10 (RKRQAG). Basic and acidic residues predominate over residues 14–28 (PDKKQLSGKRTKTEN). Polar residues predominate over residues 29–38 (SESASVKLEN).

Phosphorylated.

Its subcellular location is the nucleus. Its function is as follows. Specifically binds 5-hydroxymethylcytosine (5hmC), suggesting that it acts as a specific reader of 5hmC. In Rattus norvegicus (Rat), this protein is Thymocyte nuclear protein 1 (Thyn1).